A 194-amino-acid chain; its full sequence is Holliday junction branch migration complex subunit RuvA (194 aa).

The interval 1–64 (MISRLTGKLV…EDAHLLFGFA (64 aa)) is domain I. The domain II stretch occupies residues 65 to 143 (TAEERKTFRQ…AHTVTDGLFA (79 aa)). The flexible linker stretch occupies residues 144 to 147 (ASPA). The tract at residues 147–194 (AADETEDIVSTLLALGYNEREAKAAVKGVPKGTDVGEGVRLALKNLLK) is domain III.

Belongs to the RuvA family. As to quaternary structure, homotetramer. Forms an RuvA(8)-RuvB(12)-Holliday junction (HJ) complex. HJ DNA is sandwiched between 2 RuvA tetramers; dsDNA enters through RuvA and exits via RuvB. An RuvB hexamer assembles on each DNA strand where it exits the tetramer. Each RuvB hexamer is contacted by two RuvA subunits (via domain III) on 2 adjacent RuvB subunits; this complex drives branch migration. In the full resolvosome a probable DNA-RuvA(4)-RuvB(12)-RuvC(2) complex forms which resolves the HJ.

It localises to the cytoplasm. Functionally, the RuvA-RuvB-RuvC complex processes Holliday junction (HJ) DNA during genetic recombination and DNA repair, while the RuvA-RuvB complex plays an important role in the rescue of blocked DNA replication forks via replication fork reversal (RFR). RuvA specifically binds to HJ cruciform DNA, conferring on it an open structure. The RuvB hexamer acts as an ATP-dependent pump, pulling dsDNA into and through the RuvAB complex. HJ branch migration allows RuvC to scan DNA until it finds its consensus sequence, where it cleaves and resolves the cruciform DNA. The protein is Holliday junction branch migration complex subunit RuvA of Neisseria gonorrhoeae (strain ATCC 700825 / FA 1090).